Here is a 305-residue protein sequence, read N- to C-terminus: uncharacterized protein (305 aa).

In terms of domain architecture, ABC transporter spans 5–233 (LELKNVTKNI…ENDTYFFQVE (229 aa)). An ATP-binding site is contributed by 37-44 (GPNGAGKT).

Belongs to the ABC transporter superfamily.

This is an uncharacterized protein from Bacillus subtilis (strain 168).